Reading from the N-terminus, the 198-residue chain is MIPTVIETSGRGDRAFDIYSRLLRERIVFLGQEVRDENANLVVAQLLFLEAEDPEKDIYLYINSPGGSVSAGLGIFDTMNQIRPDVCTICIGLAASMGAFLLSAGAKGKRMSLPNSRIMIHQPLGGAQGQATDIEIQAKEILYLKALLNQHLANHTGKSLEEITADTERDFFMSAEESKEYGLIDQVINRRPSASDPI.

Residue Ser96 is the Nucleophile of the active site. His121 is a catalytic residue.

The protein belongs to the peptidase S14 family. Fourteen ClpP subunits assemble into 2 heptameric rings which stack back to back to give a disk-like structure with a central cavity, resembling the structure of eukaryotic proteasomes.

It is found in the cytoplasm. The catalysed reaction is Hydrolysis of proteins to small peptides in the presence of ATP and magnesium. alpha-casein is the usual test substrate. In the absence of ATP, only oligopeptides shorter than five residues are hydrolyzed (such as succinyl-Leu-Tyr-|-NHMec, and Leu-Tyr-Leu-|-Tyr-Trp, in which cleavage of the -Tyr-|-Leu- and -Tyr-|-Trp bonds also occurs).. Its function is as follows. Cleaves peptides in various proteins in a process that requires ATP hydrolysis. Has a chymotrypsin-like activity. Plays a major role in the degradation of misfolded proteins. The polypeptide is ATP-dependent Clp protease proteolytic subunit 1 (Synechocystis sp. (strain ATCC 27184 / PCC 6803 / Kazusa)).